The sequence spans 188 residues: Putative manganese efflux pump MntP (188 aa).

6 consecutive transmembrane segments (helical) span residues 3–23 (FYAL…VALA), 35–55 (IAAT…AGWV), 63–83 (FISE…GLKM), 107–127 (VLTA…LAFM), 131–151 (IAFA…VGLA), and 167–187 (AGGL…LGLI).

This sequence belongs to the MntP (TC 9.B.29) family.

The protein localises to the cell inner membrane. Functionally, probably functions as a manganese efflux pump. The polypeptide is Putative manganese efflux pump MntP (Neisseria meningitidis serogroup A / serotype 4A (strain DSM 15465 / Z2491)).